The chain runs to 215 residues: Probable phosphoglycerate mutase GpmB (215 aa).

Residues 8 to 15 (RHGETQWN), 21 to 22 (QG), Arg-58, Arg-60, 82 to 85 (ELNM), 104 to 105 (RR), and 151 to 152 (GI) each bind substrate. His-9 functions as the Tele-phosphohistidine intermediate in the catalytic mechanism. The Proton donor/acceptor role is filled by Glu-82.

It belongs to the phosphoglycerate mutase family. GpmB subfamily.

The enzyme catalyses (2R)-2-phosphoglycerate = (2R)-3-phosphoglycerate. Its pathway is carbohydrate degradation; glycolysis; pyruvate from D-glyceraldehyde 3-phosphate: step 3/5. This chain is Probable phosphoglycerate mutase GpmB, found in Shigella dysenteriae serotype 1 (strain Sd197).